Here is a 162-residue protein sequence, read N- to C-terminus: Succinate dehydrogenase assembly factor 2, mitochondrial (162 aa).

Residues 1 to 35 (MHNMFPALTKTLSLQGYKIINSQTGSAAWSCGRRW) constitute a mitochondrion transit peptide.

Belongs to the SDHAF2 family. Interacts with the flavoprotein subunit within the SDH catalytic dimer.

It is found in the mitochondrion matrix. In terms of biological role, plays an essential role in the assembly of succinate dehydrogenase (SDH), an enzyme complex (also referred to as respiratory complex II) that is a component of both the tricarboxylic acid (TCA) cycle and the mitochondrial electron transport chain, and which couples the oxidation of succinate to fumarate with the reduction of ubiquinone (coenzyme Q) to ubiquinol. Required for flavinylation (covalent attachment of FAD) of the flavoprotein subunit of the SDH catalytic dimer. The protein is Succinate dehydrogenase assembly factor 2, mitochondrial of Saccharomyces cerevisiae (strain RM11-1a) (Baker's yeast).